The primary structure comprises 287 residues: Cysteine-rich repeat secretory protein 59 (287 aa).

Positions 1-26 (METTKKLSPIFCFSSLLCLFFTMNQA) are cleaved as a signal peptide. 2 Gnk2-homologous domains span residues 32–134 (HMDT…DKFF) and 140–250 (KKPN…ITTS). 8 N-linked (GlcNAc...) asparagine glycosylation sites follow: N43, N47, N63, N72, N93, N103, N111, and N212.

Belongs to the cysteine-rich repeat secretory protein family.

The protein localises to the secreted. This chain is Cysteine-rich repeat secretory protein 59 (CRRSP59), found in Arabidopsis thaliana (Mouse-ear cress).